The sequence spans 83 residues: MKGIILLISCLMLIEVVVGGKEGYPLDSSGCKAGCFFGTNSWCNTECKRKSAAKGYCAWPSCYCYEFTDDSKIWNAKTNKCYK.

The N-terminal stretch at 1-19 (MKGIILLISCLMLIEVVVG) is a signal peptide. One can recognise an LCN-type CS-alpha/beta domain in the interval 21 to 82 (KEGYPLDSSG…IWNAKTNKCY (62 aa)). Disulfide bonds link Cys31–Cys81, Cys35–Cys57, Cys43–Cys62, and Cys47–Cys64.

It belongs to the long (4 C-C) scorpion toxin superfamily. Sodium channel inhibitor family. Beta subfamily. Expressed by the venom gland.

It is found in the secreted. Beta toxins bind voltage-independently at site-4 of sodium channels (Nav) and shift the voltage of activation toward more negative potentials thereby affecting sodium channel activation and promoting spontaneous and repetitive firing. The polypeptide is Toxin To15 (Tityus obscurus (Amazonian scorpion)).